The primary structure comprises 203 residues: ATP-dependent Clp protease proteolytic subunit 2 (203 aa).

The active-site Nucleophile is Ser-98. The active site involves His-123.

The protein belongs to the peptidase S14 family. As to quaternary structure, fourteen ClpP subunits assemble into 2 heptameric rings which stack back to back to give a disk-like structure with a central cavity, resembling the structure of eukaryotic proteasomes.

It is found in the cytoplasm. The catalysed reaction is Hydrolysis of proteins to small peptides in the presence of ATP and magnesium. alpha-casein is the usual test substrate. In the absence of ATP, only oligopeptides shorter than five residues are hydrolyzed (such as succinyl-Leu-Tyr-|-NHMec, and Leu-Tyr-Leu-|-Tyr-Trp, in which cleavage of the -Tyr-|-Leu- and -Tyr-|-Trp bonds also occurs).. Its function is as follows. Cleaves peptides in various proteins in a process that requires ATP hydrolysis. Has a chymotrypsin-like activity. Plays a major role in the degradation of misfolded proteins. The chain is ATP-dependent Clp protease proteolytic subunit 2 from Chlamydia pneumoniae (Chlamydophila pneumoniae).